The primary structure comprises 274 residues: Penicillin-insensitive murein endopeptidase (274 aa).

The first 19 residues, 1–19 (MKKTAIALLAWFVSSASLA), serve as a signal peptide directing secretion. Intrachain disulfides connect Cys-44/Cys-265, Cys-187/Cys-235, and Cys-216/Cys-223. 6 residues coordinate Zn(2+): His-110, His-113, Asp-120, Asp-147, His-150, and His-211. The disordered stretch occupies residues 225-274 (DQPLPPPGDGCGAELQSWFEPPKPGTTKPEKKTPPPLPPSCQALLDEHVL).

This sequence belongs to the peptidase M74 family. In terms of assembly, dimer. Requires Zn(2+) as cofactor.

Its subcellular location is the periplasm. Its function is as follows. Murein endopeptidase that cleaves the D-alanyl-meso-2,6-diamino-pimelyl amide bond that connects peptidoglycan strands. Likely plays a role in the removal of murein from the sacculus. The protein is Penicillin-insensitive murein endopeptidase of Salmonella agona (strain SL483).